Here is a 281-residue protein sequence, read N- to C-terminus: Mad-like protein 1 (281 aa).

Residues 71 to 80 are compositionally biased toward low complexity; that stretch reads SCASNASTSS. The interval 71–105 is disordered; the sequence is SCASNASTSSQPYCSSPPARKSSKHSRTAHNELEK. The segment at 95–108 is basic motif; sequence HSRTAHNELEKTRR. The bHLH domain occupies 95 to 147; the sequence is HSRTAHNELEKTRRANLRGCLETLKMLVPCVSDATRNTTLALLTRARDHIIEL. A helix-loop-helix motif region spans residues 109 to 147; sequence ANLRGCLETLKMLVPCVSDATRNTTLALLTRARDHIIEL. Positions 144-185 form a coiled coil; it reads IIELQDSNAAQMKKLNDLRDEQDELVAELAQLQADEEVAQAT. A disordered region spans residues 189–213; that stretch reads CQTLSQSRPESRASSFTSTSSRDSP. The span at 200 to 212 shows a compositional bias: low complexity; it reads RASSFTSTSSRDS.

Forms heterodimer with mxl-1 in the presence and absence of DNA. Ubiquitinated. In terms of tissue distribution, expressed in intestinal cells in adults. Expressed in D-type motor neuron cell bodies.

It localises to the nucleus. Its function is as follows. Transcriptional regulator which binds to the E box motif 5'-CACGTG-3', when in a heterodimeric complex with mxl-1. Involved in the control of lifespan in response to dietary restriction, the decline in protein homeostasis associated with normal aging, germline signaling and may overlap with the insulin-like signaling pathway. Plays a role in autophagy. Involved in promoting infection by the microsporidian pathogen N.parisii, possibly together with transcription factors pha-4 and zip-10. In response to neuronal injury, mdl-1 is targeted by sdz-33 for ubiquitin-mediated degradation, probably thereby reducing levels of mdl-1-mxl-1 heterodimers, allowing free mxl-1 to form complexes with tdpt-1 and thus inhibiting tdpt-1-dependent sumoylation of ets-4. The protein is Mad-like protein 1 of Caenorhabditis elegans.